Consider the following 412-residue polypeptide: tRNA (guanine-N(7)-)-methyltransferase non-catalytic subunit WDR4 (412 aa).

Ala-2 carries the N-acetylalanine modification. 7 WD repeats span residues 3–40, 50–90, 94–131, 137–174, 180–218, 230–273, and 319–373; these read GSVGLALCGQTLVVRGGSRFLATSIASSDDDSLFIYDC, NKGE…LFRT, QCLSVRTVARRCTALTFIASEEKVLVADKSGDVYSFSV, CGRLELGHLSMLLDVAVSPDDRFILTADRDEKIRVSWA, IESFCLGHTEFVSRISVVPTQPGLLLSSSGDGTLRLWEY, ASLQ…IFQL, and PVGD…SYLK. Residues 377–412 form a disordered region; sequence ERLQQQLEKKQRRRSPPPGPDGHAKKMRPGEATLSC. A phosphoserine mark is found at Ser-391 and Ser-411.

Belongs to the WD repeat TRM82 family. In terms of assembly, non-catalytic component of the METTL1-WDR4 complex, composed of METTL1 and WDR4. Interacts with FEN1; the interaction is direct.

The protein localises to the nucleus. It localises to the chromosome. It participates in tRNA modification; N(7)-methylguanine-tRNA biosynthesis. Non-catalytic component of the METTL1-WDR4 methyltransferase complex required for the formation of N(7)-methylguanine in a subset of RNA species, such as tRNAs, mRNAs and microRNAs (miRNAs). In the METTL1-WDR4 methyltransferase complex, WDR4 acts as a scaffold for tRNA-binding. Required for the formation of N(7)-methylguanine at position 46 (m7G46) in a large subset of tRNAs that contain the 5'-RAGGU-3' motif within the variable loop. M7G46 interacts with C13-G22 in the D-loop to stabilize tRNA tertiary structure and protect tRNAs from decay. Also required for the formation of N(7)-methylguanine at internal sites in a subset of mRNAs. Also required for methylation of a specific subset of miRNAs, such as let-7. Independently of METTL1, also plays a role in genome stability: localizes at the DNA replication site and regulates endonucleolytic activities of FEN1. This chain is tRNA (guanine-N(7)-)-methyltransferase non-catalytic subunit WDR4, found in Homo sapiens (Human).